The chain runs to 699 residues: tRNA 5-methylaminomethyl-2-thiouridine biosynthesis bifunctional protein MnmC (699 aa).

The segment at 1 to 247 is tRNA (mnm(5)s(2)U34)-methyltransferase; it reads MPAVSRPLPP…KREMLCGEIA (247 aa). The tract at residues 275-699 is FAD-dependent cmnm(5)s(2)U34 oxidoreductase; sequence IGAGLAGTSV…QPSPTTTETP (425 aa). The disordered stretch occupies residues 675–699; the sequence is RGNATLSTSSPNDDAQPSPTTTETP.

In the N-terminal section; belongs to the methyltransferase superfamily. tRNA (mnm(5)s(2)U34)-methyltransferase family. This sequence in the C-terminal section; belongs to the DAO family. It depends on FAD as a cofactor.

It is found in the cytoplasm. The enzyme catalyses 5-aminomethyl-2-thiouridine(34) in tRNA + S-adenosyl-L-methionine = 5-methylaminomethyl-2-thiouridine(34) in tRNA + S-adenosyl-L-homocysteine + H(+). Its function is as follows. Catalyzes the last two steps in the biosynthesis of 5-methylaminomethyl-2-thiouridine (mnm(5)s(2)U) at the wobble position (U34) in tRNA. Catalyzes the FAD-dependent demodification of cmnm(5)s(2)U34 to nm(5)s(2)U34, followed by the transfer of a methyl group from S-adenosyl-L-methionine to nm(5)s(2)U34, to form mnm(5)s(2)U34. The chain is tRNA 5-methylaminomethyl-2-thiouridine biosynthesis bifunctional protein MnmC from Chromohalobacter salexigens (strain ATCC BAA-138 / DSM 3043 / CIP 106854 / NCIMB 13768 / 1H11).